A 1249-amino-acid chain; its full sequence is Nuclear envelope pore membrane protein POM 121 (1249 aa).

Over residues 1–10 (MSPAAAAAGA) the composition is skewed to low complexity. The interval 1–27 (MSPAAAAAGAGERRRPIASVRDGRGRG) is disordered. The segment at 1–34 (MSPAAAAAGAGERRRPIASVRDGRGRGCGGPARA) is cisternal side. Positions 1 to 285 (MSPAAAAAGA…APPDRRFSRS (285 aa)) are required for targeting to the nucleus and nuclear pore complex. Residues 11-25 (GERRRPIASVRDGRG) are compositionally biased toward basic and acidic residues. The helical transmembrane segment at 35 to 55 (VLLGLSLVGLLLYLVPAAAAL) threads the bilayer. The interval 56 to 1249 (AWLTVGATAA…QARRQHTRKK (1194 aa)) is pore side. Serine 94 bears the Phosphoserine mark. Disordered stretches follow at residues 136–220 (LMGS…CGTL), 319–530 (KEKK…LGYS), 602–776 (KKMQ…PVFS), 959–986 (PLPS…AKPA), and 1226–1249 (IGAG…TRKK). Residues 168–190 (ARPAPRSPPPRSPPPRSPPPSPP) are compositionally biased toward pro residues. Serine 345, serine 351, serine 371, serine 393, and serine 396 each carry phosphoserine. Residues 405–423 (IPSSSRNAITSSYSSTRGI) are compositionally biased toward polar residues. Low complexity predominate over residues 432–445 (PSSSPFSSPASSRS). 2 stretches are compositionally biased toward basic and acidic residues: residues 450–462 (RPAK…ELCH) and 472–486 (ADRE…DTTP). Polar residues predominate over residues 491 to 502 (NSNSQSTPGSSG). The span at 635 to 652 (PPLGLSQSGPPGLLPSPS) shows a compositional bias: low complexity. Over residues 683 to 696 (QAETATKPQATSAP) the composition is skewed to polar residues. Composition is skewed to low complexity over residues 712–726 (SPSS…SAPP) and 749–770 (SVTA…TAPT). The segment covering 1239–1249 (LQARRQHTRKK) has biased composition (basic residues).

This sequence belongs to the POM121 family.

It is found in the nucleus. The protein localises to the nuclear pore complex. Its subcellular location is the nucleus membrane. It localises to the endoplasmic reticulum membrane. Functionally, essential component of the nuclear pore complex (NPC). The repeat-containing domain may be involved in anchoring components of the pore complex to the pore membrane. When overexpressed in cells induces the formation of cytoplasmic annulate lamellae (AL). This is Nuclear envelope pore membrane protein POM 121 (POM121) from Homo sapiens (Human).